The sequence spans 345 residues: MSYLIKPAGYKALLNLSQTEMGIKKIKDFFQQNLSSELRLRRVTAPLFVLKGMGINDDLNGTERAVTFPIKDLNDSKAEIVHSLAKWKRLTLADYHIEEGYGIYTDMNAIRSDEELGNLHSLYVDQWDWERVMSESERKIDFLKEIVRRIYAAMVRTEYLVYEMFPQIRPTLPQQIHFIHSEDLLQKYPTFTPKEREDAITKEYGAVFIIGIGCSLSNGEKHDGRAPDYDDWSTIAENGQTGLNGDLLVWDDVLNRSMELSSMGIRVNKEALLRQLDICKAGEKKELYFHKRLLSGELPQSIGGGIGQSRLCMFYLRKAHIGEIQASIWPEEMRKEARAAGMMLI.

Belongs to the class-II aminoacyl-tRNA synthetase family. AsnA subfamily.

Its subcellular location is the cytoplasm. The enzyme catalyses L-aspartate + NH4(+) + ATP = L-asparagine + AMP + diphosphate + H(+). The protein operates within amino-acid biosynthesis; L-asparagine biosynthesis; L-asparagine from L-aspartate (ammonia route): step 1/1. The polypeptide is Aspartate--ammonia ligase (Parabacteroides distasonis (strain ATCC 8503 / DSM 20701 / CIP 104284 / JCM 5825 / NCTC 11152)).